The sequence spans 1279 residues: ATP-dependent helicase/nuclease subunit A (1279 aa).

The UvrD-like helicase ATP-binding domain maps to 4–499 (TKWTDEQRQA…VKLFKNFRSR (496 aa)). 25 to 32 (AGAGAGKT) is a binding site for ATP. Residues 526-853 (EEALKVGASY…RIMSIHKSKG (328 aa)) enclose the UvrD-like helicase C-terminal domain.

It belongs to the helicase family. AddA subfamily. Heterodimer of AddA and AddB/RexB. It depends on Mg(2+) as a cofactor.

The enzyme catalyses Couples ATP hydrolysis with the unwinding of duplex DNA by translocating in the 3'-5' direction.. It carries out the reaction ATP + H2O = ADP + phosphate + H(+). Its function is as follows. The heterodimer acts as both an ATP-dependent DNA helicase and an ATP-dependent, dual-direction single-stranded exonuclease. Recognizes the chi site generating a DNA molecule suitable for the initiation of homologous recombination. The AddA nuclease domain is required for chi fragment generation; this subunit has the helicase and 3' -&gt; 5' nuclease activities. The protein is ATP-dependent helicase/nuclease subunit A of Clostridium botulinum (strain Kyoto / Type A2).